A 239-amino-acid polypeptide reads, in one-letter code: Ribonuclease PH (239 aa).

Residues Arg-86 and 124–126 (GTR) contribute to the phosphate site.

This sequence belongs to the RNase PH family. In terms of assembly, homohexameric ring arranged as a trimer of dimers.

It catalyses the reaction tRNA(n+1) + phosphate = tRNA(n) + a ribonucleoside 5'-diphosphate. In terms of biological role, phosphorolytic 3'-5' exoribonuclease that plays an important role in tRNA 3'-end maturation. Removes nucleotide residues following the 3'-CCA terminus of tRNAs; can also add nucleotides to the ends of RNA molecules by using nucleoside diphosphates as substrates, but this may not be physiologically important. Probably plays a role in initiation of 16S rRNA degradation (leading to ribosome degradation) during starvation. The protein is Ribonuclease PH of Sodalis glossinidius (strain morsitans).